We begin with the raw amino-acid sequence, 360 residues long: Cannabinoid receptor 2 (360 aa).

At 1-33 (MEECWVTEIANGSKDGLDSNPMKDYMILSGPQK) the chain is on the extracellular side. The N-linked (GlcNAc...) asparagine glycan is linked to Asn11. A helical transmembrane segment spans residues 34–59 (TAVAVLCTLLGLLSALENVAVLYLIL). Over 60–71 (SSHQLRRKPSYL) the chain is Cytoplasmic. A helical membrane pass occupies residues 72–92 (FIGSLAGADFLASVVFACSFV). Over 93 to 104 (NFHVFHGVDSKA) the chain is Extracellular. Residues 105 to 129 (VFLLKIGSVTMTFTASVGSLLLTAI) traverse the membrane as a helical segment. The Cytoplasmic portion of the chain corresponds to 130–149 (DRYLCLRYPPSYKALLTRGR). The helical transmembrane segment at 150–172 (ALVTLGIMWVLSALVSYLPLMGW) threads the bilayer. Residues 173 to 188 (TCCPRPCSELFPLIPN) are Extracellular-facing. A helical transmembrane segment spans residues 189-214 (DYLLSWLLFIAFLFSGIIYTYGHVLW). At 215 to 246 (KAHQHVASLSGHQDRQVPGMARMRLDVRLAKT) the chain is on the cytoplasmic side. Residues 247 to 267 (LGLVLAVLLICWFPVLALMAH) form a helical membrane-spanning segment. At 268 to 279 (SLATTLSDQVKK) the chain is on the extracellular side. A helical membrane pass occupies residues 280–301 (AFAFCSMLCLINSMVNPVIYAL). Over 302–360 (RSGEIRSSAHHCLAHWKKCVRGLGSEAKEEAPRSSVTETEADGKITPWPDSRDLDLSDC) the chain is Cytoplasmic. The tract at residues 327–360 (EAKEEAPRSSVTETEADGKITPWPDSRDLDLSDC) is disordered. 2 positions are modified to phosphoserine: Ser335 and Ser336. Phosphothreonine is present on Thr338. A compositionally biased stretch (basic and acidic residues) spans 351–360 (DSRDLDLSDC). Ser352 is modified (phosphoserine).

It belongs to the G-protein coupled receptor 1 family. In terms of processing, constitutively phosphorylated on Ser-352; phosphorylation increases cell internalization and desensitizes the receptor. Preferentially expressed in cells of the immune system with higher expression in B-cells and NK cells (at protein level). Expressed in skin in suprabasal layers and hair follicles (at protein level). Highly expressed in tonsil and to a lower extent in spleen, peripheral blood mononuclear cells, and thymus. PubMed:14657172 could not detect expression in normal brain. Expressed in brain by perivascular microglial cells and dorsal root ganglion sensory neurons (at protein level). Two isoforms are produced by alternative promoter usage and differ only in the 5' UTR: isoform CB2A is observed predominantly in testis with some expression in brain, while isoform CB2B is predominant in spleen and leukocytes.

The protein localises to the cell membrane. It localises to the cell projection. It is found in the dendrite. The protein resides in the perikaryon. In terms of biological role, heterotrimeric G protein-coupled receptor for endocannabinoid 2-arachidonoylglycerol mediating inhibition of adenylate cyclase. May function in inflammatory response, nociceptive transmission and bone homeostasis. This chain is Cannabinoid receptor 2 (CNR2), found in Homo sapiens (Human).